Consider the following 650-residue polypeptide: MKLLRRRFFNSVNTITRPNRRHYATKYVAKVTSSSPSGRSLSAEVSLPNPLPADVRGYPLPRRHLICRATNLITGASNLSDAFSDLSDYLSSLSLSLTPDEASEILKSLNSPLLAVEFFKLVPSLCPYSQNDPFLYNRIILILSRSNLPDRFDRVRSILDSMVKSNVHGNISTVNILIGFFGNTEDLQMCLRLVKKWDLKMNSFTYKCLLQAYLRSRDYSKAFDVYCEIRRGGHKLDIFAYNMLLDALAKDEKACQVFEDMKKRHCRRDEYTYTIMIRTMGRIGKCDEAVGLFNEMITEGLTLNVVGYNTLMQVLAKGKMVDKAIQVFSRMVETGCRPNEYTYSLLLNLLVAEGQLVRLDGVVEISKRYMTQGIYSYLVRTLSKLGHVSEAHRLFCDMWSFPVKGERDSYMSMLESLCGAGKTIEAIEMLSKIHEKGVVTDTMMYNTVFSALGKLKQISHIHDLFEKMKKDGPSPDIFTYNILIASFGRVGEVDEAINIFEELERSDCKPDIISYNSLINCLGKNGDVDEAHVRFKEMQEKGLNPDVVTYSTLMECFGKTERVEMAYSLFEEMLVKGCQPNIVTYNILLDCLEKNGRTAEAVDLYSKMKQQGLTPDSITYTVLERLQSVSHGKSRIRRKNPITGWVVSPL.

The N-terminal 23 residues, 1–23, are a transit peptide targeting the mitochondrion; that stretch reads MKLLRRRFFNSVNTITRPNRRHY. PPR repeat units follow at residues 132–169, 170–200, 202–236, 237–267, 269–303, 304–338, 339–369, 371–405, 406–440, 441–475, 476–510, 511–545, 546–580, and 581–615; these read DPFLYNRIILILSRSNLPDRFDRVRSILDSMVKSNVHG, NISTVNILIGFFGNTEDLQMCLRLVKKWDLK, NSFTYKCLLQAYLRSRDYSKAFDVYCEIRRGGHKL, DIFAYNMLLDALAKDEKACQVFEDMKKRHCR, DEYTYTIMIRTMGRIGKCDEAVGLFNEMITEGLTL, NVVGYNTLMQVLAKGKMVDKAIQVFSRMVETGCRP, NEYTYSLLLNLLVAEGQLVRLDGVVEISKRY, TQGIYSYLVRTLSKLGHVSEAHRLFCDMWSFPVKG, ERDSYMSMLESLCGAGKTIEAIEMLSKIHEKGVVT, DTMMYNTVFSALGKLKQISHIHDLFEKMKKDGPSP, DIFTYNILIASFGRVGEVDEAINIFEELERSDCKP, DIISYNSLINCLGKNGDVDEAHVRFKEMQEKGLNP, DVVTYSTLMECFGKTERVEMAYSLFEEMLVKGCQP, and NIVTYNILLDCLEKNGRTAEAVDLYSKMKQQGLTP.

Belongs to the PPR family. P subfamily.

It is found in the mitochondrion. The protein is Pentatricopeptide repeat-containing protein At1g51965, mitochondrial of Arabidopsis thaliana (Mouse-ear cress).